We begin with the raw amino-acid sequence, 221 residues long: Orotate phosphoribosyltransferase (221 aa).

Position 26 (K26) interacts with 5-phospho-alpha-D-ribose 1-diphosphate. 34 to 35 (FF) contributes to the orotate binding site. 5-phospho-alpha-D-ribose 1-diphosphate contacts are provided by residues 72-73 (YK), R98, K99, K102, H104, and 123-131 (DDVISAGTS). Orotate contacts are provided by S127 and R155.

The protein belongs to the purine/pyrimidine phosphoribosyltransferase family. PyrE subfamily. As to quaternary structure, homodimer. It depends on Mg(2+) as a cofactor.

The enzyme catalyses orotidine 5'-phosphate + diphosphate = orotate + 5-phospho-alpha-D-ribose 1-diphosphate. It participates in pyrimidine metabolism; UMP biosynthesis via de novo pathway; UMP from orotate: step 1/2. In terms of biological role, catalyzes the transfer of a ribosyl phosphate group from 5-phosphoribose 1-diphosphate to orotate, leading to the formation of orotidine monophosphate (OMP). In Herminiimonas arsenicoxydans, this protein is Orotate phosphoribosyltransferase.